The sequence spans 903 residues: Alanine--tRNA ligase (903 aa).

The Zn(2+) site is built by histidine 591, histidine 595, cysteine 695, and histidine 699.

Belongs to the class-II aminoacyl-tRNA synthetase family. It depends on Zn(2+) as a cofactor.

The protein localises to the cytoplasm. The enzyme catalyses tRNA(Ala) + L-alanine + ATP = L-alanyl-tRNA(Ala) + AMP + diphosphate. In terms of biological role, catalyzes the attachment of alanine to tRNA(Ala) in a two-step reaction: alanine is first activated by ATP to form Ala-AMP and then transferred to the acceptor end of tRNA(Ala). Also edits incorrectly charged Ser-tRNA(Ala) and Gly-tRNA(Ala) via its editing domain. This Methanosphaera stadtmanae (strain ATCC 43021 / DSM 3091 / JCM 11832 / MCB-3) protein is Alanine--tRNA ligase.